Consider the following 763-residue polypeptide: Lysine-specific histone demethylase 1 homolog 2 (763 aa).

In terms of domain architecture, SWIRM spans 53–152 (QRETETEALI…FGVSAAFPAS (100 aa)). Residues E192, R194, R200, and E571 each contribute to the FAD site.

Belongs to the flavin monoamine oxidase family. Requires FAD as cofactor.

Probable histone demethylase. This is Lysine-specific histone demethylase 1 homolog 2 from Oryza sativa subsp. japonica (Rice).